The following is a 247-amino-acid chain: Acidic leucine-rich nuclear phosphoprotein 32 family member A (247 aa).

Thr15 carries the post-translational modification Phosphothreonine. At Ser17 the chain carries Phosphoserine. LRR repeat units lie at residues 18-41 (DVKELVLDNCRSIEGKIEGLTDEF), 43-64 (ELEFLSTINVGLTSISNLPKLN), 65-87 (KLKKLELSENRISGDLEVLAEKC), and 89-110 (NLKHLNLSGNKIKDLSTIEPLK). An LRRCT domain is found at 123-161 (CEVTNLNAYRENVFKLLPQVMYLDGYDRDNKEAPDSDVE). The necessary for tumor-suppressive function stretch occupies residues 150 to 172 (RDNKEAPDSDVEGYVEDDDEEDE). A disordered region spans residues 150–247 (RDNKEAPDSD…EPDDEGQEDD (98 aa)). The span at 157-230 (DSDVEGYVED…EDEEDAAEEE (74 aa)) shows a compositional bias: acidic residues. Ser158 and Ser202 each carry phosphoserine. The interval 165–247 (EDDDEEDEDE…EPDDEGQEDD (83 aa)) is interaction with E4F1.

The protein belongs to the ANP32 family. Component of the SET complex, composed of at least ANP32A, APEX1, HMGB2, NME1, SET and TREX1. Directly interacts with SET. Interacts with ATXN1/SCA1. Interacts with MAP1B. Interacts with ELAVL1. Part of the INHAT (inhibitor of histone acetyltransferases) complex. Interacts with E4F1. Phosphorylated on serine residues, at least in part by casein kinase 2/CK2. Post-translationally, some glutamate residues are glycylated by TTLL8. This modification occurs exclusively on glutamate residues and results in a glycine chain on the gamma-carboxyl group. Widely distributed in the central nervous system, with an abundant expression in the cerebellum.

It localises to the nucleus. The protein localises to the cytoplasm. It is found in the endoplasmic reticulum. Functionally, multifunctional protein that is involved in the regulation of many processes including tumor suppression, apoptosis, cell cycle progression or transcription. Promotes apoptosis by favouring the activation of caspase-9/CASP9 and allowing apoptosome formation. In addition, plays a role in the modulation of histone acetylation and transcription as part of the INHAT (inhibitor of histone acetyltransferases) complex. Inhibits the histone-acetyltranferase activity of EP300/CREBBP (CREB-binding protein) and EP300/CREBBP-associated factor by histone masking. Preferentially binds to unmodified histone H3 and sterically inhibiting its acetylation and phosphorylation leading to cell growth inhibition. Participates in other biochemical processes such as regulation of mRNA nuclear-to-cytoplasmic translocation and stability by its association with ELAVL1 (Hu-antigen R). Plays a role in E4F1-mediated transcriptional repression as well as inhibition of protein phosphatase 2A. The polypeptide is Acidic leucine-rich nuclear phosphoprotein 32 family member A (Anp32a) (Rattus norvegicus (Rat)).